A 165-amino-acid polypeptide reads, in one-letter code: Small ribosomal subunit protein uS13 (165 aa).

Residues 139 to 165 (GMTIGVARKKAAQPQSQQSSSQQQKSS) are disordered. The segment covering 153–165 (QSQQSSSQQQKSS) has biased composition (low complexity).

This sequence belongs to the universal ribosomal protein uS13 family. In terms of assembly, part of the 30S ribosomal subunit. Forms a loose heterodimer with protein S19. Forms two bridges to the 50S subunit in the 70S ribosome.

Located at the top of the head of the 30S subunit, it contacts several helices of the 16S rRNA. In the 70S ribosome it contacts the 23S rRNA (bridge B1a) and protein L5 of the 50S subunit (bridge B1b), connecting the 2 subunits; these bridges are implicated in subunit movement. This chain is Small ribosomal subunit protein uS13, found in Saccharolobus solfataricus (strain ATCC 35092 / DSM 1617 / JCM 11322 / P2) (Sulfolobus solfataricus).